Reading from the N-terminus, the 218-residue chain is Thiopurine S-methyltransferase (218 aa).

4 residues coordinate S-adenosyl-L-methionine: tryptophan 10, leucine 45, glutamate 66, and arginine 123.

Belongs to the class I-like SAM-binding methyltransferase superfamily. TPMT family.

It is found in the cytoplasm. The catalysed reaction is S-adenosyl-L-methionine + a thiopurine = S-adenosyl-L-homocysteine + a thiopurine S-methylether.. The chain is Thiopurine S-methyltransferase from Pseudomonas fluorescens (strain SBW25).